The sequence spans 247 residues: PF03932 family protein CutC (247 aa).

Over residues 205–222 (KSTRPSLMESNSSAQMGS) the composition is skewed to polar residues. Positions 205–226 (KSTRPSLMESNSSAQMGSNDVD) are disordered.

Belongs to the CutC family.

It is found in the cytoplasm. The sequence is that of PF03932 family protein CutC from Vibrio atlanticus (strain LGP32) (Vibrio splendidus (strain Mel32)).